Reading from the N-terminus, the 506-residue chain is ATP synthase subunit alpha (506 aa).

Residue glycine 170–threonine 177 coordinates ATP.

This sequence belongs to the ATPase alpha/beta chains family. As to quaternary structure, F-type ATPases have 2 components, CF(1) - the catalytic core - and CF(0) - the membrane proton channel. CF(1) has five subunits: alpha(3), beta(3), gamma(1), delta(1), epsilon(1). CF(0) has four main subunits: a(1), b(1), b'(1) and c(9-12).

The protein localises to the cellular thylakoid membrane. The enzyme catalyses ATP + H2O + 4 H(+)(in) = ADP + phosphate + 5 H(+)(out). Its function is as follows. Produces ATP from ADP in the presence of a proton gradient across the membrane. The alpha chain is a regulatory subunit. The polypeptide is ATP synthase subunit alpha (Synechococcus sp. (strain CC9605)).